A 752-amino-acid chain; its full sequence is Photosystem I P700 chlorophyll a apoprotein A1 (752 aa).

A run of 8 helical transmembrane segments spans residues 73–96 (IFAA…FHGA), 159–182 (LYVT…FHYH), 198–222 (LNHH…HVSA), 294–312 (ISHH…GHMY), 349–372 (WHAQ…HHMY), 388–414 (LCIF…IFMV), 436–458 (AIIS…LYVH), and 533–551 (FLVH…LILL). Residues C575 and C584 each contribute to the [4Fe-4S] cluster site. 2 consecutive transmembrane segments (helical) span residues 591–612 (HVFL…HFSW) and 666–688 (LSAY…MFLF). H677 is a binding site for chlorophyll a'. M685 and Y693 together coordinate chlorophyll a. Residue W694 participates in phylloquinone binding. The helical transmembrane segment at 726–746 (AVGVAHYLLGGIATTWAFFHA) threads the bilayer.

It belongs to the PsaA/PsaB family. As to quaternary structure, the PsaA/B heterodimer binds the P700 chlorophyll special pair and subsequent electron acceptors. PSI consists of a core antenna complex that captures photons, and an electron transfer chain that converts photonic excitation into a charge separation. The cyanobacterial PSI reaction center is composed of one copy each of PsaA,B,C,D,E,F,I,J,K,L,M and X, and forms trimeric complexes. PSI electron transfer chain: 5 chlorophyll a, 1 chlorophyll a', 2 phylloquinones and 3 4Fe-4S clusters. PSI core antenna: 90 chlorophyll a, 22 carotenoids, 3 phospholipids and 1 galactolipid. P700 is a chlorophyll a/chlorophyll a' dimer, A0 is one or more chlorophyll a, A1 is one or both phylloquinones and FX is a shared 4Fe-4S iron-sulfur center. serves as cofactor.

Its subcellular location is the cellular thylakoid membrane. The enzyme catalyses reduced [plastocyanin] + hnu + oxidized [2Fe-2S]-[ferredoxin] = oxidized [plastocyanin] + reduced [2Fe-2S]-[ferredoxin]. Functionally, psaA and PsaB bind P700, the primary electron donor of photosystem I (PSI), as well as the electron acceptors A0, A1 and FX. PSI is a plastocyanin/cytochrome c6-ferredoxin oxidoreductase, converting photonic excitation into a charge separation, which transfers an electron from the donor P700 chlorophyll pair to the spectroscopically characterized acceptors A0, A1, FX, FA and FB in turn. Oxidized P700 is reduced on the lumenal side of the thylakoid membrane by plastocyanin or cytochrome c6. This is Photosystem I P700 chlorophyll a apoprotein A1 from Mastigocladus laminosus (Fischerella sp.).